We begin with the raw amino-acid sequence, 620 residues long: Protein VERNALIZATION INSENSITIVE 3 (620 aa).

The PHD-type zinc finger occupies 148-206 (RCSCCICQKFDDNKDPSLWLTCDACGSSCHLECGLKQDRYGIGSDDLDGRFYCAYCGKD). The Nuclear localization signal motif lies at 213-220 (WRKQVKVA). In terms of domain architecture, Fibronectin type-III spans 314 to 412 (DKMTVRVEEI…ELRFTTLKDD (99 aa)). Residues 411–466 (DDGDEAGDQQSPLTNSSSGLCSNPSLPEDESNNVNKSCSKGNGDKDNTEHCSAGEV) form a disordered region. The segment covering 418-435 (DQQSPLTNSSSGLCSNPS) has biased composition (polar residues). A Nuclear localization signal motif is present at residues 493 to 500 (CKRDIYKG). The segment at 512–620 (TVSLNEKPEI…PAGICLKLWH (109 aa)) is VIN3-Interacting Domain (VID).

As to quaternary structure, interacts with VIL1 and VIL2. The heterodimer made of VIN3 and VIL1 is required for establishing the vernalization-induced epigenetic silencing of FLC. Component of the plant homeodomain / polycomb repressive complex 2 (PHD-PRC2) large complex during prolonged cold, composed of core PRC2 components (VRN2, EZA1, FIE and MSI1), and three related PHD finger proteins (VIL1, VIL2 and VIN3) that mediates histone H3 trimethylation on 'Lys-27' (H3K27me3). Expressed in shoot and root apices. Displays the same pattern of expression as FLC.

The protein localises to the nucleus. Its subcellular location is the nucleus speckle. Functionally, plays a central role in vernalization by mediating the initial transcriptional repression of the homeotic gene FLC, a floral repressor, after a cold treatment. However, due to its transient expression, it cannot maintain repression of FLC, which is then maintained by Polycomb Group complexes containing VRN2 throughout development. Required to deacetylate histones on the FLC promoter. Together with VIL1, required during vernalization for the modifications of FLC and FLM chromatin that are associated with an epigenetically silenced state (e.g. chromatin modifications, histone deacetylation, and trimethylated H3 'Lys-4' H3K4me3 and 'Lys-27' H3K27me3) and with acquisition of competence to flower. The polypeptide is Protein VERNALIZATION INSENSITIVE 3 (VIN3) (Arabidopsis thaliana (Mouse-ear cress)).